Reading from the N-terminus, the 435-residue chain is Trigger factor (435 aa).

A PPIase FKBP-type domain is found at 163–248 (GELASVTFSA…VHAVKERKMP (86 aa)).

This sequence belongs to the FKBP-type PPIase family. Tig subfamily.

Its subcellular location is the cytoplasm. The enzyme catalyses [protein]-peptidylproline (omega=180) = [protein]-peptidylproline (omega=0). Involved in protein export. Acts as a chaperone by maintaining the newly synthesized protein in an open conformation. Functions as a peptidyl-prolyl cis-trans isomerase. The polypeptide is Trigger factor (Maridesulfovibrio salexigens (strain ATCC 14822 / DSM 2638 / NCIMB 8403 / VKM B-1763) (Desulfovibrio salexigens)).